We begin with the raw amino-acid sequence, 284 residues long: MGQALGLVQVDQSTVAIKESFGKFDEVLEPGCHFLPWCIGKQIAGYLSLRVQQLDVRCETKTKDNVFVNVVASVQYRALAEKASDAFYRLSNTREQIQSYVFDVIRASVPKMNLDDAFEQKNEIAKAVEDELEKAMSMYGYEIVQTLIVDIEPDEHVKRAMNEINAAARLRVAANEKAEAEKILQIKRAEGDAESKYLAGLGIARQRQAIVDGLRDSVLAFSENVPGTSAKDVMDMVLVTQYFDTMKEIGASSKSSSVFIPHGPGAVKDIAAQIRDGQLQAKLI.

The N-myristoyl glycine moiety is linked to residue Gly2.

In terms of assembly, interacts with LRR1.

It localises to the cell membrane. Its function is as follows. Positive regulator of hypersensitive response (HR)-like cell death. May be involved in potassium ion channel regulation. The chain is Hypersensitive-induced response protein 1 from Oryza sativa subsp. japonica (Rice).